The chain runs to 370 residues: MFMASTTSAVPWHLSQPTPAGNGSEGELLTARDPLLAQAELALLSTVFVAVALSNGLVLGALVRRGRRGRWAPMHVFIGHLCLADLAVALFQVLPQLAWDATDRFRGPDALCRAVKYLQMVGMYASSYMILAMTLDRHRAICRPMLAHRHGGGTHWNRPVLLAWAFSLLFSLPQLFIFAQRDVDGSGVLDCWARFAEPWGLRAYVTWIALMVFVAPALGIAACQVLIFREIHASLGPGPVPRAGGPRRGCRPGSPAEGARVSAAVAKTVKMTLVIVIVYVLCWAPFFLVQLWAAWDPEAPREGPPFVLLMLLASLNSCTNPWIYASFSSSISSELRSLLCCTWRRAPPSPGPQEESCATASSFLAKDTPS.

Polar residues predominate over residues 1–21 (MFMASTTSAVPWHLSQPTPAG). Residues 1–26 (MFMASTTSAVPWHLSQPTPAGNGSEG) form a disordered region. Topologically, residues 1–38 (MFMASTTSAVPWHLSQPTPAGNGSEGELLTARDPLLAQ) are extracellular. Asparagine 22 carries N-linked (GlcNAc...) asparagine glycosylation. Residues 39–63 (AELALLSTVFVAVALSNGLVLGALV) form a helical membrane-spanning segment. The Cytoplasmic portion of the chain corresponds to 64–77 (RRGRRGRWAPMHVF). The chain crosses the membrane as a helical span at residues 78–98 (IGHLCLADLAVALFQVLPQLA). At 99-113 (WDATDRFRGPDALCR) the chain is on the extracellular side. A helical membrane pass occupies residues 114–135 (AVKYLQMVGMYASSYMILAMTL). Residues 136–159 (DRHRAICRPMLAHRHGGGTHWNRP) lie on the Cytoplasmic side of the membrane. The chain crosses the membrane as a helical span at residues 160-180 (VLLAWAFSLLFSLPQLFIFAQ). Residues 181 to 199 (RDVDGSGVLDCWARFAEPW) lie on the Extracellular side of the membrane. Residues 200–219 (GLRAYVTWIALMVFVAPALG) form a helical membrane-spanning segment. At 220–270 (IAACQVLIFREIHASLGPGPVPRAGGPRRGCRPGSPAEGARVSAAVAKTVK) the chain is on the cytoplasmic side. Residues 271–292 (MTLVIVIVYVLCWAPFFLVQLW) traverse the membrane as a helical segment. The Extracellular portion of the chain corresponds to 293–307 (AAWDPEAPREGPPFV). Residues 308 to 327 (LLMLLASLNSCTNPWIYASF) form a helical membrane-spanning segment. The Cytoplasmic segment spans residues 328–370 (SSSISSELRSLLCCTWRRAPPSPGPQEESCATASSFLAKDTPS). Residues cysteine 340 and cysteine 341 are each lipidated (S-palmitoyl cysteine). A disordered region spans residues 347 to 370 (PPSPGPQEESCATASSFLAKDTPS).

This sequence belongs to the G-protein coupled receptor 1 family. Vasopressin/oxytocin receptor subfamily. Interacts with ARRDC4. Identified in a complex containing at least ARRDC4, V2R and HGS. Interacts with TMEM147.

The protein localises to the cell membrane. Receptor for arginine vasopressin. The activity of this receptor is mediated by G proteins which activate adenylate cyclase. Involved in renal water reabsorption. This Bos taurus (Bovine) protein is Vasopressin V2 receptor (AVPR2).